The sequence spans 248 residues: Type III pantothenate kinase (248 aa).

An ATP-binding site is contributed by 6–13 (ELGNSQLK). Residues Tyr94 and 101 to 104 (GVDR) each bind substrate. Catalysis depends on Asp103, which acts as the Proton acceptor. Asp123 provides a ligand contact to K(+). Thr126 is an ATP binding site. Thr179 is a binding site for substrate.

It belongs to the type III pantothenate kinase family. In terms of assembly, homodimer. It depends on NH4(+) as a cofactor. Requires K(+) as cofactor.

The protein localises to the cytoplasm. It catalyses the reaction (R)-pantothenate + ATP = (R)-4'-phosphopantothenate + ADP + H(+). It participates in cofactor biosynthesis; coenzyme A biosynthesis; CoA from (R)-pantothenate: step 1/5. In terms of biological role, catalyzes the phosphorylation of pantothenate (Pan), the first step in CoA biosynthesis. This is Type III pantothenate kinase from Hydrogenovibrio crunogenus (strain DSM 25203 / XCL-2) (Thiomicrospira crunogena).